Reading from the N-terminus, the 296-residue chain is PYK10-binding protein 2 (296 aa).

A disordered region spans residues 1–20 (MAQKVEAKGGKGGNQWDDGS). Residue A2 is modified to N-acetylalanine. 2 Jacalin-type lectin domains span residues 2–142 (AQKV…YFAP) and 150–293 (AKPL…HVRP).

This sequence belongs to the jacalin lectin family. As to quaternary structure, component of the PYK10 complex, at least composed of PYK10/BGLU23, BGLU21, BGLU22, JAL22, JAL23, PBP1/JAL30, PBP2/JAL31, JAL32, JAL33, JAL34, JAL35, GLL22 and GLL23.

In terms of biological role, polymerizer-type lectin that may facilitate the correct polymerization of BGLU23/PYK10 upon tissue damage. Activates BGLU21, BGLU22 and BGLU23. The polypeptide is PYK10-binding protein 2 (PBP2) (Arabidopsis thaliana (Mouse-ear cress)).